Here is a 250-residue protein sequence, read N- to C-terminus: MSGHSKWATIKRKKAATDQKRGKLFTKLVKEITISARMGGGDPDGNPRLRLAIENARANSMPAENIKRAVQRGTGEIDGANYEEISYEGYGPGGIAVIIEAATDNRNRTVAEVRHIMSRSGGSLGESGSVSWMFQRKGSISIAKSLASEEQLMELLLEAGLEDLKTDDEDYFSVLTDVKDLESAKKALEAAKIAYEDAKIDMIPDNTIELDGEDAEKALKMVDALEDNDDVQMVYTNMEISESALEKLNQ.

The protein belongs to the TACO1 family.

Its subcellular location is the cytoplasm. This chain is Probable transcriptional regulatory protein Ctha_1786, found in Chloroherpeton thalassium (strain ATCC 35110 / GB-78).